Reading from the N-terminus, the 405-residue chain is NADH-quinone oxidoreductase subunit D (405 aa).

It belongs to the complex I 49 kDa subunit family. In terms of assembly, NDH-1 is composed of 14 different subunits. Subunits NuoB, C, D, E, F, and G constitute the peripheral sector of the complex.

It is found in the cell inner membrane. It carries out the reaction a quinone + NADH + 5 H(+)(in) = a quinol + NAD(+) + 4 H(+)(out). In terms of biological role, NDH-1 shuttles electrons from NADH, via FMN and iron-sulfur (Fe-S) centers, to quinones in the respiratory chain. The immediate electron acceptor for the enzyme in this species is believed to be ubiquinone. Couples the redox reaction to proton translocation (for every two electrons transferred, four hydrogen ions are translocated across the cytoplasmic membrane), and thus conserves the redox energy in a proton gradient. The protein is NADH-quinone oxidoreductase subunit D of Ruegeria pomeroyi (strain ATCC 700808 / DSM 15171 / DSS-3) (Silicibacter pomeroyi).